The sequence spans 85 residues: Toxin BmKa3 (85 aa).

The first 19 residues, 1–19, serve as a signal peptide directing secretion; the sequence is MNYLVFFSLALLLMTGVES. The LCN-type CS-alpha/beta domain occupies 21-83; sequence RDGYIADDKN…VPIRVPGKCN (63 aa). 4 disulfide bridges follow: Cys-31–Cys-82, Cys-35–Cys-55, Cys-41–Cys-65, and Cys-45–Cys-67.

Belongs to the long (4 C-C) scorpion toxin superfamily. Sodium channel inhibitor family. Alpha subfamily. As to expression, expressed by the venom gland.

Its subcellular location is the secreted. Alpha toxins bind voltage-independently at site-3 of sodium channels (Nav) and inhibit the inactivation of the activated channels, thereby blocking neuronal transmission. This chain is Toxin BmKa3, found in Olivierus martensii (Manchurian scorpion).